The primary structure comprises 1045 residues: E3 ubiquitin-protein ligase Topors (1045 aa).

The disordered stretch occupies residues 1 to 35 (MGSQPPLGSPLSREEGEAPPPAPASEGRRRSRRVR). Positions 1–195 (MGSQPPLGSP…RERNASVYSP (195 aa)) are E3 ubiquitin-protein ligase activity. Positions 51–374 (ELAASAPARP…MAAFDQHANY (324 aa)) are required for DNA-binding. Residues Lys-73, Lys-76, Lys-83, and Lys-88 each participate in a glycyl lysine isopeptide (Lys-Gly) (interchain with G-Cter in SUMO2) cross-link. Ser-98 carries the phosphoserine modification. The RING-type zinc finger occupies 103 to 142 (CPICLDRFDNVSYLDRCLHKFCFRCVQEWSKNKAECPLCK). Lys-159 participates in a covalent cross-link: Glycyl lysine isopeptide (Lys-Gly) (interchain with G-Cter in SUMO2). Ser-194 carries the phosphoserine modification. Residue Lys-249 forms a Glycyl lysine isopeptide (Lys-Gly) (interchain with G-Cter in SUMO2) linkage. Positions 437–574 (SLLNTSDSSD…STSLSSPRNL (138 aa)) are required for sumoylation and localization to discrete nuclear foci. The interval 437–654 (SLLNTSDSSD…RSRTRDSSWS (218 aa)) is interaction with SUMO1. The disordered stretch occupies residues 442–475 (SDSSDEELVTGGATSQIQGVQTNDDLNNDSDDSS). Positions 453-463 (GATSQIQGVQT) are enriched in polar residues. The interaction with p53/TP53 stretch occupies residues 456-731 (SQIQGVQTND…RRTLSRAHYS (276 aa)). The segment at 456 to 882 (SQIQGVQTND…GKATDTTKHH (427 aa)) is interaction with TOP1. Ser-499 is subject to Phosphoserine. The tract at residues 511 to 692 (ETVKTQEQEQ…RSRNRDRYYL (182 aa)) is disordered. The segment covering 521–534 (SYSSGDSDVSRCSS) has biased composition (low complexity). A compositionally biased stretch (basic and acidic residues) spans 539-565 (LGKDEQINKGHCDSSTRIKSKKEEKRS). Lys-560 participates in a covalent cross-link: Glycyl lysine isopeptide (Lys-Gly) (interchain with G-Cter in SUMO). Over residues 566–578 (TSLSSPRNLNSSV) the composition is skewed to polar residues. Phosphoserine is present on Ser-585. Composition is skewed to basic residues over residues 588-597 (NHRHRKRGRS), 613-630 (KNHR…KRSR), and 637-647 (PRGRRDKKRSR). Positions 654–669 (SRRSQTLSLSSESTSR) are enriched in low complexity. A Glycyl lysine isopeptide (Lys-Gly) (interchain with G-Cter in SUMO2) cross-link involves residue Lys-701. The tract at residues 713–936 (RDGYESSYRR…DNSGPQDPLQ (224 aa)) is disordered. Ser-718 is subject to Phosphoserine; by PLK1. Residues 721–730 (RRRTLSRAHY) show a composition bias toward basic residues. Residues 731 to 747 (SRQSSSPEFRVQSFSER) are compositionally biased toward polar residues. Position 734 is a phosphoserine (Ser-734). Basic and acidic residues-rich tracts occupy residues 755–766 (NHSERKYYYYER) and 816–825 (FASKAKDSHY). Glycyl lysine isopeptide (Lys-Gly) (interchain with G-Cter in SUMO2) cross-links involve residues Lys-819 and Lys-837. The segment covering 854–863 (KHKRRKRKTR) has biased composition (basic residues). An interaction with UBE2I region spans residues 854 to 917 (KHKRRKRKTR…ITIDSDSDKD (64 aa)). Phosphoserine occurs at positions 864 and 866. Residues 880–897 (KHHKKKKKKHKKKHKKHH) show a composition bias toward basic residues. A phosphoserine mark is found at Ser-912, Ser-914, and Ser-1028. Residues 913 to 923 (DSDKDSEVKED) are compositionally biased toward basic and acidic residues.

In terms of assembly, interacts with PARK7/DJ-1. Interacts with TOP1. Interacts with p53/TP53; can both ubiquitinate and sumoylate p53/TP53. Interacts with the SUMO1 conjugating enzyme UBE2I. Interacts with SUMO1. Interacts with NKX3-1; polyubiquitinates NKX3-1 and induces its proteasomal degradation. Interacts with SIN3A; sumoylates SIN3A. Interacts with IKBKE; induced by DNA damage. Phosphorylation at Ser-98 regulates the E3 ubiquitin-protein ligase activity but not the SUMO1-protein ligase activity. Phosphorylation at Ser-718 increases the E3 ubiquitin-protein ligase activity versus the SUMO1-protein ligase activity resulting in increased p53/TP53 ubiquitination and degradation. Post-translationally, sumoylated. As to expression, expressed at highest levels in testis and at lower levels in adrenal gland, bone marrow, brain, colon, heart, kidney, liver, muscle, ovary, pancreas, placenta, prostate, skeletal muscle, skin, small intestine, spleen, stomach, testis, thymus, thyroid and uterus. Expressed in the alveolar epithelium of the lung. Expression is commonly decreased in colon adenocarcinomas and lung cancers.

It is found in the nucleus. The protein resides in the PML body. The catalysed reaction is S-ubiquitinyl-[E2 ubiquitin-conjugating enzyme]-L-cysteine + [acceptor protein]-L-lysine = [E2 ubiquitin-conjugating enzyme]-L-cysteine + N(6)-ubiquitinyl-[acceptor protein]-L-lysine.. Functionally, functions as an E3 ubiquitin-protein ligase and as an E3 SUMO1-protein ligase. Probable tumor suppressor involved in cell growth, cell proliferation and apoptosis that regulates p53/TP53 stability through ubiquitin-dependent degradation. May regulate chromatin modification through sumoylation of several chromatin modification-associated proteins. May be involved in DNA damage-induced cell death through IKBKE sumoylation. The polypeptide is E3 ubiquitin-protein ligase Topors (TOPORS) (Homo sapiens (Human)).